We begin with the raw amino-acid sequence, 1076 residues long: Nuclear factor of activated T-cells, cytoplasmic 3 (1076 aa).

T2 is subject to N-acetylthreonine. Residues 110 to 115 form a calcineurin-binding region; it reads PSIQIT. Residues 206-307 are disordered; it reads LGSPLTSPGG…PGHSPRGSVT (102 aa). 2 tandem repeats follow at residues 208–224 and 237–253. Residues 208–309 are 3 X SP repeats; it reads SPLTSPGGSP…HSPRGSVTED (102 aa). A compositionally biased stretch (polar residues) spans 237 to 254; sequence SPRQSPCHSPRSSITDEN. Residues 257-271 are compositionally biased toward low complexity; it reads SPRPASGPSSRPTSP. The short motif at 274-276 is the Nuclear localization signal element; the sequence is KRR. Repeat 3 spans residues 293–309; that stretch reads SPVPSPGHSPRGSVTED. S345 is subject to Phosphoserine. The tract at residues 359-390 is disordered; the sequence is CSDDQGSLSPSRETSVDDGLGSQYPLKKDSSG. Residues 362–371 are compositionally biased toward polar residues; sequence DQGSLSPSRE. Residue S373 is modified to Phosphoserine. Residues 416–597 form the RHD domain; the sequence is SSLPPLDWPL…IPVECSQRSA (182 aa). The DNA-binding element occupies 445–452; the sequence is RAHYETEG. The short motif at 687–689 is the Nuclear localization signal element; sequence KRK. Disordered regions lie at residues 700-744 and 863-987; these read PVLM…ALSA and GHLL…GGLS. Low complexity predominate over residues 713–722; it reads LSSVPSLPVP. Polar residues-rich tracts occupy residues 724–734 and 888–911; these read SAQTQRPSSDT and SAGQRSLSSPVAAQVTGQPSSHLQ. Low complexity-rich tracts occupy residues 917–939 and 946–965; these read PSHPGSATAASPAASHALSSSPI and QLQSMPYQSPSSGTASSPSP. Positions 970-981 are enriched in polar residues; it reads HSGQHSTQAQST. Residues 1032–1041 carry the Nuclear export signal motif; it reads TLDDVNEIIG. The tract at residues 1049 to 1076 is disordered; the sequence is VSQGPEVIRDAPLPGPESPDVMSSNSAQ. S1066 is modified (phosphoserine).

As to quaternary structure, NFATC proteins bind to DNA as monomers. Member of the multicomponent NFATC transcription complex that consists of at least two components, a pre-existing cytoplasmic component NFATC2 and an inducible nuclear component NFATC1. Other members such as NFATC4, or members of the activating protein-1 family, MAF, GATA4 and Cbp/p300 can also bind the complex. Component of a promoter-binding complex composed of STAT3, NFATC3 and NFATC4; complex formation is enhanced by calcineurin. Interacts with TRIM17; this interaction prevents NFATC3 nuclear localization. Interacts with and ubiquitinated by STUB1/CHIP; HSPA1A/HSP70 is required as a co-chaperone. In terms of processing, phosphorylated by NFATC-kinase; dephosphorylated by calcineurin. Post-translationally, ubiquitinated by STUB1/CHIP, leading to proteasomal degradation. As to expression, expressed in cardiomyocytes (at protein level).

The protein resides in the cytoplasm. It localises to the nucleus. In terms of biological role, acts as a regulator of transcriptional activation. Binds to the TNFSF11/RANKL promoter region and promotes TNFSF11 transcription. Binding to the TNFSF11 promoter region is increased by high levels of Ca(2+) which induce NFATC3 expression and may lead to regulation of TNFSF11 expression in osteoblasts. Plays a role in promoting mesenteric arterial wall remodeling in response to the intermittent hypoxia-induced increase in EDN1 and ROCK signaling. As a result NFATC3 colocalizes with F-actin filaments, translocates to the nucleus and promotes transcription of the smooth muscle hypertrophy and differentiation marker ACTA2. Promotes lipopolysaccharide-induced apoptosis and hypertrophy in cardiomyocytes. Following JAK/STAT signaling activation and as part of a complex with NFATC4 and STAT3, binds to the alpha-beta E4 promoter region of CRYAB and activates transcription in cardiomyocytes. In conjunction with NFATC4, involved in embryonic heart development via maintenance of cardiomyocyte survival, proliferation and differentiation. Plays a role in the inducible expression of cytokine genes in T-cells, especially in the induction of the IL-2. Required for thymocyte maturation during DN3 to DN4 transition and during positive selection. Positively regulates macrophage-derived polymicrobial clearance, via binding to the promoter region and promoting transcription of NOS2 resulting in subsequent generation of nitric oxide. Involved in Ca(2+)-mediated transcriptional responses upon Ca(2+) influx via ORAI1 CRAC channels. The protein is Nuclear factor of activated T-cells, cytoplasmic 3 of Rattus norvegicus (Rat).